The primary structure comprises 1188 residues: Adenomatous polyposis coli protein-related protein 1 (1188 aa).

Positions methionine 1–glutamate 50 are disordered. Residues methionine 1–proline 486 form a required for interaction with bar-1 and hmp-2 region. One copy of the ARM repeat lies at asparagine 314–serine 358. Low complexity predominate over residues isoleucine 579–alanine 588. Disordered regions lie at residues isoleucine 579–proline 624, threonine 670–threonine 702, threonine 726–leucine 751, glutamine 778–phenylalanine 952, cysteine 1003–lysine 1092, and tyrosine 1157–lysine 1181. The segment at aspartate 600–valine 1188 is required for interaction with pry-1. Polar residues-rich tracts occupy residues proline 604–proline 624 and leucine 677–alanine 701. Composition is skewed to polar residues over residues glutamine 778–proline 788 and phenylalanine 800–alanine 811. Basic and acidic residues-rich tracts occupy residues arginine 832–leucine 843 and glutamate 871–glycine 900. 4 stretches are compositionally biased toward polar residues: residues tryptophan 909–aspartate 929, glutamate 937–alanine 946, glutamine 1014–serine 1039, and glycine 1164–proline 1180.

It belongs to the adenomatous polyposis coli (APC) family. Interacts (via N-terminus) with bar-1 and hmp-2; the interaction with hmp-2 is relatively weak. Interacts (via C-terminus) with pry-1 (via N-terminus). Probably associates with bar-1, gsk-3, pry-1 in a complex. As to expression, during the L1 stage, expressed in vulval precursor cells (P3-8.p), seam cells and excretory cells.

The protein resides in the cell junction. It is found in the adherens junction. It localises to the cytoplasm. Its subcellular location is the nucleus. In terms of biological role, has a role in endoderm cell specification and pharyngeal development. Required for the migration of epithelial cells, organization of the anterior seam cells and ceh-13 expression during embryo morphogenesis. Prevents hyperactivation of the Wnt signaling pathway during endoderm development, probably by preventing hmp-2 nuclear translocation. During larval development, apr-1 is required for expression of lin-39 in P3-8.p. Shown to negatively regulate Wnt signaling in vulval precursor cells. Has a role in cell division by establishing the polarity of the mother cell which forms the asymmetries of the daughter nuclei. During the L4 larval stage, it is required for the asymmetric division and self-renewal of seam cells. Thought to regulate export of wrm-1 from the nucleus possibly as part of a complex involving pry-1. This is Adenomatous polyposis coli protein-related protein 1 from Caenorhabditis elegans.